Here is a 494-residue protein sequence, read N- to C-terminus: Voltage-gated potassium channel regulatory subunit KCNF1 (494 aa).

At 1–183 (MDGSGERSLP…KPESSCPARV (183 aa)) the chain is on the cytoplasmic side. A helical transmembrane segment spans residues 184-204 (VAVLSFLLILVSSVVMCMGTI). The helical transmembrane segment at 224-244 (NVETACIGWFTLEYLLRLFSS) threads the bilayer. At 245-249 (PNKLH) the chain is on the cytoplasmic side. Residues 250–270 (FALSFMNIVDVLAILPFYVSL) form a helical membrane-spanning segment. The helical; Voltage-sensor transmembrane segment at 290–310 (QALRIMRIARIFKLARHSSGL) threads the bilayer. Over 311–324 (QTLTYALKRSFKEL) the chain is Cytoplasmic. Residues 325-345 (GLLLMYLAVGIFVFSALGYTM) form a helical membrane-spanning segment. Positions 358 to 378 (PQSFWWAIITMTTVGYGDIYP) form an intramembrane region, pore-forming. Residues 370–375 (TVGYGD) carry the Selectivity filter motif. Residues 386–406 (NAAISFLCGVIAIALPIHPII) form a helical membrane-spanning segment. Residues 407 to 494 (NNFVRYYNKQ…HHRTRLQSCK (88 aa)) are Cytoplasmic-facing. The segment at 433-469 (NSSSGGEGKTGGSRSDLDNLPPEPAGKEAPSCSSRLK) is disordered.

This sequence belongs to the potassium channel family. F (TC 1.A.1.2) subfamily. Kv5.1/KCNF1 sub-subfamily. Heterotetramer with KCNB1 or KCNB2. Detected in heart, brain, liver, skeletal muscle, kidney and pancreas.

It localises to the cell membrane. In terms of biological role, regulatory alpha-subunit of the voltage-gated potassium (Kv) channel which, when coassembled with KCNB1 or KCNB2, can modulate their expression and their gating kinetics by acting on deactivation upon repolarization and inactivation during maintained depolarization. Accelerates inactivation but has relatively little effect on deactivation. Coexpression with KCNB1 or KCNB2 markedly slows inactivation. Each modulatory subunit has its own specific properties of regulation, and can lead to extensive inhibitions, to large changes in kinetics, and/or to large shifts in the voltage dependencies of the inactivation process. The gating kinetics depends on the nature and stoichiometry of the associated regulatory sunbunit. Fails to produce a potassium current when expressed alone. This chain is Voltage-gated potassium channel regulatory subunit KCNF1, found in Homo sapiens (Human).